A 417-amino-acid polypeptide reads, in one-letter code: Glucose-1-phosphate adenylyltransferase (417 aa).

Residues Tyr98, Gly163, 178-179, and Ser197 each bind alpha-D-glucose 1-phosphate; that span reads EK.

Belongs to the bacterial/plant glucose-1-phosphate adenylyltransferase family. Homotetramer.

It carries out the reaction alpha-D-glucose 1-phosphate + ATP + H(+) = ADP-alpha-D-glucose + diphosphate. It participates in glycan biosynthesis; glycogen biosynthesis. In terms of biological role, involved in the biosynthesis of ADP-glucose, a building block required for the elongation reactions to produce glycogen. Catalyzes the reaction between ATP and alpha-D-glucose 1-phosphate (G1P) to produce pyrophosphate and ADP-Glc. This is Glucose-1-phosphate adenylyltransferase from Koribacter versatilis (strain Ellin345).